Reading from the N-terminus, the 336-residue chain is Homoserine dehydrogenase (336 aa).

Phe8 provides a ligand contact to NADPH. Positions 10, 11, and 94 each coordinate NAD(+). Residues Ile11, Thr94, and Lys123 each coordinate NADPH. Ile11, Thr94, and Lys123 together coordinate NADP(+). Residues Glu147, Val150, and Gly152 each contribute to the Na(+) site. NADP(+) contacts are provided by Gly205 and Glu208. Residues Glu208 and Asp219 each coordinate L-homoserine. Lys223 serves as the catalytic Proton donor. Gly315 lines the NADPH pocket. Residue Gly315 coordinates NAD(+). Gly315 is a binding site for NADP(+).

The protein belongs to the homoserine dehydrogenase family. A metal cation is required as a cofactor.

It catalyses the reaction L-homoserine + NADP(+) = L-aspartate 4-semialdehyde + NADPH + H(+). The enzyme catalyses L-homoserine + NAD(+) = L-aspartate 4-semialdehyde + NADH + H(+). The protein operates within amino-acid biosynthesis; L-methionine biosynthesis via de novo pathway; L-homoserine from L-aspartate: step 3/3. It functions in the pathway amino-acid biosynthesis; L-threonine biosynthesis; L-threonine from L-aspartate: step 3/5. Its function is as follows. Catalyzes the conversion of L-aspartate-beta-semialdehyde (L-Asa) to L-homoserine (L-Hse), the third step in the biosynthesis of threonine and methionine from aspartate. The chain is Homoserine dehydrogenase (hom) from Methanocaldococcus jannaschii (strain ATCC 43067 / DSM 2661 / JAL-1 / JCM 10045 / NBRC 100440) (Methanococcus jannaschii).